Consider the following 389-residue polypeptide: Phosphoglycerate kinase (389 aa).

Substrate is bound by residues 19 to 21 (DYN), Arg34, 57 to 60 (HLGR), Arg117, and Arg150. ATP contacts are provided by residues Lys200, Gly288, Glu319, and 347 to 350 (GGDS).

The protein belongs to the phosphoglycerate kinase family. In terms of assembly, monomer.

The protein resides in the cytoplasm. It catalyses the reaction (2R)-3-phosphoglycerate + ATP = (2R)-3-phospho-glyceroyl phosphate + ADP. Its pathway is carbohydrate degradation; glycolysis; pyruvate from D-glyceraldehyde 3-phosphate: step 2/5. The chain is Phosphoglycerate kinase from Deinococcus geothermalis (strain DSM 11300 / CIP 105573 / AG-3a).